A 113-amino-acid polypeptide reads, in one-letter code: Large ribosomal subunit protein uL24 (113 aa).

It belongs to the universal ribosomal protein uL24 family. As to quaternary structure, part of the 50S ribosomal subunit.

Its function is as follows. One of two assembly initiator proteins, it binds directly to the 5'-end of the 23S rRNA, where it nucleates assembly of the 50S subunit. In terms of biological role, one of the proteins that surrounds the polypeptide exit tunnel on the outside of the subunit. The sequence is that of Large ribosomal subunit protein uL24 (rplX) from Fusobacterium nucleatum subsp. nucleatum (strain ATCC 25586 / DSM 15643 / BCRC 10681 / CIP 101130 / JCM 8532 / KCTC 2640 / LMG 13131 / VPI 4355).